Here is a 331-residue protein sequence, read N- to C-terminus: tRNA uridine(34) hydroxylase (331 aa).

A Rhodanese domain is found at 123 to 217 (TDPEVLLIDT…YLEDVPQEES (95 aa)). The Cysteine persulfide intermediate role is filled by Cys177. The segment at 293 to 331 (KSRGEEHIGSEAAKAIKKRQAEKKLKRKNYHQHLTQGAE) is disordered. Residues 307-323 (AIKKRQAEKKLKRKNYH) show a composition bias toward basic residues.

It belongs to the TrhO family.

It carries out the reaction uridine(34) in tRNA + AH2 + O2 = 5-hydroxyuridine(34) in tRNA + A + H2O. Catalyzes oxygen-dependent 5-hydroxyuridine (ho5U) modification at position 34 in tRNAs. This chain is tRNA uridine(34) hydroxylase, found in Hahella chejuensis (strain KCTC 2396).